Here is a 96-residue protein sequence, read N- to C-terminus: Phosphoribosyl-ATP pyrophosphatase (96 aa).

It belongs to the PRA-PH family.

It localises to the cytoplasm. It carries out the reaction 1-(5-phospho-beta-D-ribosyl)-ATP + H2O = 1-(5-phospho-beta-D-ribosyl)-5'-AMP + diphosphate + H(+). It functions in the pathway amino-acid biosynthesis; L-histidine biosynthesis; L-histidine from 5-phospho-alpha-D-ribose 1-diphosphate: step 2/9. This chain is Phosphoribosyl-ATP pyrophosphatase, found in Methanobrevibacter smithii (strain ATCC 35061 / DSM 861 / OCM 144 / PS).